A 202-amino-acid polypeptide reads, in one-letter code: Phosphatidyl-N-methylethanolamine N-methyltransferase (202 aa).

The Lumenal portion of the chain corresponds to methionine 1–glutamine 12. An intramembrane region (helical) is located at residues aspartate 13 to alanine 33. At arginine 34–isoleucine 45 the chain is on the lumenal side. The helical transmembrane segment at phenylalanine 46–leucine 66 threads the bilayer. The Cytoplasmic portion of the chain corresponds to arginine 67–glycine 90. The helical transmembrane segment at glycine 91–threonine 111 threads the bilayer. Alanine 95–glycine 97 contributes to the S-adenosyl-L-methionine binding site. The Lumenal portion of the chain corresponds to glycine 112–lysine 154. Residues glycine 155–lysine 175 form a helical membrane-spanning segment. At tryptophan 176–glutamine 202 the chain is on the cytoplasmic side. Glutamate 177–aspartate 178 is a binding site for S-adenosyl-L-methionine.

This sequence belongs to the class VI-like SAM-binding methyltransferase superfamily. PEMT/PEM2 methyltransferase family.

The protein localises to the endoplasmic reticulum membrane. It localises to the mitochondrion membrane. It carries out the reaction a 1,2-diacyl-sn-glycero-3-phospho-N-methylethanolamine + S-adenosyl-L-methionine = a 1,2-diacyl-sn-glycero-3-phospho-N,N-dimethylethanolamine + S-adenosyl-L-homocysteine + H(+). It catalyses the reaction a 1,2-diacyl-sn-glycero-3-phospho-N,N-dimethylethanolamine + S-adenosyl-L-methionine = a 1,2-diacyl-sn-glycero-3-phosphocholine + S-adenosyl-L-homocysteine + H(+). Its pathway is phospholipid metabolism; phosphatidylcholine biosynthesis. Its function is as follows. Catalyzes the second two steps of the methylation pathway of phosphatidylcholine biosynthesis, the SAM-dependent methylation of phosphatidylmonomethylethanolamine (PMME) to phosphatidyldimethylethanolamine (PDME) and of PDME to phosphatidylcholine (PC). The chain is Phosphatidyl-N-methylethanolamine N-methyltransferase from Emericella nidulans (strain FGSC A4 / ATCC 38163 / CBS 112.46 / NRRL 194 / M139) (Aspergillus nidulans).